The primary structure comprises 205 residues: Guanylate kinase (205 aa).

A Guanylate kinase-like domain is found at 17–195; it reads PRLTVLSGPS…VSRELLALML (179 aa). 24-31 serves as a coordination point for ATP; the sequence is GPSGVGKS.

Belongs to the guanylate kinase family.

The protein resides in the cytoplasm. The catalysed reaction is GMP + ATP = GDP + ADP. Essential for recycling GMP and indirectly, cGMP. This chain is Guanylate kinase, found in Streptomyces kasugaensis.